A 215-amino-acid chain; its full sequence is Thymidylate kinase (215 aa).

An ATP-binding site is contributed by 11–18 (GIDGAGKS).

It belongs to the thymidylate kinase family.

It catalyses the reaction dTMP + ATP = dTDP + ADP. Functionally, phosphorylation of dTMP to form dTDP in both de novo and salvage pathways of dTTP synthesis. The sequence is that of Thymidylate kinase from Nitrosomonas eutropha (strain DSM 101675 / C91 / Nm57).